The sequence spans 99 residues: UPF0235 protein Neut_2146 (99 aa).

The protein belongs to the UPF0235 family.

This chain is UPF0235 protein Neut_2146, found in Nitrosomonas eutropha (strain DSM 101675 / C91 / Nm57).